We begin with the raw amino-acid sequence, 171 residues long: Ribosome maturation factor RimM (171 aa).

In terms of domain architecture, PRC barrel spans 96 to 170 (AEGEYYYHEI…LVTIHVTEGL (75 aa)).

It belongs to the RimM family. As to quaternary structure, binds ribosomal protein uS19.

The protein localises to the cytoplasm. An accessory protein needed during the final step in the assembly of 30S ribosomal subunit, possibly for assembly of the head region. Essential for efficient processing of 16S rRNA. May be needed both before and after RbfA during the maturation of 16S rRNA. It has affinity for free ribosomal 30S subunits but not for 70S ribosomes. This is Ribosome maturation factor RimM from Bacillus anthracis (strain A0248).